The chain runs to 233 residues: Octanoyltransferase (233 aa).

The region spanning 36-211 (DTTPDEIWLV…EFTRQLGYPT (176 aa)) is the BPL/LPL catalytic domain. Residues 75–82 (RGGQITYH), 142–144 (SLG), and 155–157 (GLA) each bind substrate. Catalysis depends on C173, which acts as the Acyl-thioester intermediate.

Belongs to the LipB family.

Its subcellular location is the cytoplasm. The catalysed reaction is octanoyl-[ACP] + L-lysyl-[protein] = N(6)-octanoyl-L-lysyl-[protein] + holo-[ACP] + H(+). It functions in the pathway protein modification; protein lipoylation via endogenous pathway; protein N(6)-(lipoyl)lysine from octanoyl-[acyl-carrier-protein]: step 1/2. Functionally, catalyzes the transfer of endogenously produced octanoic acid from octanoyl-acyl-carrier-protein onto the lipoyl domains of lipoate-dependent enzymes. Lipoyl-ACP can also act as a substrate although octanoyl-ACP is likely to be the physiological substrate. The sequence is that of Octanoyltransferase from Yersinia pseudotuberculosis serotype O:1b (strain IP 31758).